Reading from the N-terminus, the 208-residue chain is Guanylate kinase (208 aa).

Positions 4 to 185 (GNLYILSAPS…ALADFQAILR (182 aa)) constitute a Guanylate kinase-like domain. Residue 11–18 (APSGAGKS) participates in ATP binding.

The protein belongs to the guanylate kinase family.

Its subcellular location is the cytoplasm. The enzyme catalyses GMP + ATP = GDP + ADP. Functionally, essential for recycling GMP and indirectly, cGMP. This Pasteurella multocida (strain Pm70) protein is Guanylate kinase (gmk).